The following is a 69-amino-acid chain: uncharacterized protein (69 aa).

This is an uncharacterized protein from Homo sapiens (Human).